The primary structure comprises 539 residues: Diacylglycerol O-acyltransferase 1 (539 aa).

The disordered stretch occupies residues 1–104 (MAISDMPEST…NDGGEKIANG (104 aa)). A compositionally biased stretch (polar residues) spans 33–52 (TETTEVSDSNSKTTDPDSGN). Basic and acidic residues predominate over residues 56–80 (ESVRVRDSSTDESLARKSCEDDGSR). The next 7 helical transmembrane spans lie at 143–163 (HAGLFNLCIVVLVAVNSRLII), 187–207 (WPLLMCCLTLPIFPAAAFVVE), 219–239 (VVLLLHFIITTAALLYPVFVI), 244–264 (SVVLSGVTLMLFACIVWLKLV), 294–314 (YPYSVSFKSLAYFMVAPTLCY), 334–354 (VKLIIFTGVMGFIIEQYINPI), and 383–403 (VWLCMFYCFFHLWLNILAELL). The FYXDWWN motif motif lies at 410–416 (FYKDWWN). Transmembrane regions (helical) follow at residues 451–471 (GVAILIAFFVSAIFHELCIAV), 473–493 (CHIFKLWAFIGIMCQVPLVLI), and 506–526 (VGNMIFWFFFCILGQPMCVLL). His465 is a catalytic residue.

The protein belongs to the membrane-bound acyltransferase family. Sterol o-acyltransferase subfamily.

It localises to the endoplasmic reticulum membrane. The enzyme catalyses an acyl-CoA + a 1,2-diacyl-sn-glycerol = a triacyl-sn-glycerol + CoA. It functions in the pathway glycerolipid metabolism; triacylglycerol biosynthesis. Its function is as follows. Major contributor to triacylglycerol (TAG) synthesis and oil accumulation in developing seeds. Catalyzes the acylation of the sn-3 hydroxy group of sn-1,2-diacylglycerol using acyl-CoA. Has a marked preference for oleoyl-CoA as substrate. This chain is Diacylglycerol O-acyltransferase 1, found in Corylus americana (American hazelnut).